The chain runs to 360 residues: Phenylalanine--tRNA ligase alpha subunit (360 aa).

E260 provides a ligand contact to Mg(2+).

The protein belongs to the class-II aminoacyl-tRNA synthetase family. Phe-tRNA synthetase alpha subunit type 1 subfamily. As to quaternary structure, tetramer of two alpha and two beta subunits. The cofactor is Mg(2+).

Its subcellular location is the cytoplasm. The enzyme catalyses tRNA(Phe) + L-phenylalanine + ATP = L-phenylalanyl-tRNA(Phe) + AMP + diphosphate + H(+). The protein is Phenylalanine--tRNA ligase alpha subunit of Bradyrhizobium sp. (strain BTAi1 / ATCC BAA-1182).